The following is a 489-amino-acid chain: Bridging integrator 2 (489 aa).

In terms of domain architecture, BAR spans 28 to 244 (VLQKLGKTVE…MSKLEKQHSN (217 aa)). The segment covering 267 to 302 (QSCAASSPVSPVSPVSPVTSPTSPSATSEPESVSAT) has biased composition (low complexity). The interval 267-489 (QSCAASSPVS…ASGGLVGLFL (223 aa)) is disordered. Serine 273 bears the Phosphoserine mark. The span at 311 to 331 (GGEDSCESQESLKDEEADEAQ) shows a compositional bias: acidic residues. Serine 357 bears the Phosphoserine mark. Positions 358–368 (QEEALSSSAQS) are enriched in low complexity. 9 positions are modified to phosphoserine: serine 380, serine 392, serine 420, serine 422, serine 424, serine 430, serine 435, serine 439, and serine 443.

In terms of assembly, homodimer. Interacts with BIN1. Interacts with ARHGEF6 (via SH3 domain), ARHGEF7 (via SH3 domain), SH3GL1, SH3GL2 and SH3GL3. Identified in a complex with ARHGEF6 and GIT2.

Its subcellular location is the cytoplasm. It localises to the cell projection. The protein localises to the podosome membrane. It is found in the cell cortex. The protein resides in the phagocytic cup. In terms of biological role, promotes cell motility and migration, probably via its interaction with the cell membrane and with podosome proteins that mediate interaction with the cytoskeleton. Modulates membrane curvature and mediates membrane tubulation. Inhibits phagocytosis. Plays a role in podosome formation. The protein is Bridging integrator 2 (Bin2) of Mus musculus (Mouse).